A 156-amino-acid polypeptide reads, in one-letter code: ATP synthase subunit b (156 aa).

A helical membrane pass occupies residues 7-29 (LLGQAISFALFVWFCMKYVWPPL).

Belongs to the ATPase B chain family. In terms of assembly, F-type ATPases have 2 components, F(1) - the catalytic core - and F(0) - the membrane proton channel. F(1) has five subunits: alpha(3), beta(3), gamma(1), delta(1), epsilon(1). F(0) has three main subunits: a(1), b(2) and c(10-14). The alpha and beta chains form an alternating ring which encloses part of the gamma chain. F(1) is attached to F(0) by a central stalk formed by the gamma and epsilon chains, while a peripheral stalk is formed by the delta and b chains.

The protein resides in the cell inner membrane. Its function is as follows. F(1)F(0) ATP synthase produces ATP from ADP in the presence of a proton or sodium gradient. F-type ATPases consist of two structural domains, F(1) containing the extramembraneous catalytic core and F(0) containing the membrane proton channel, linked together by a central stalk and a peripheral stalk. During catalysis, ATP synthesis in the catalytic domain of F(1) is coupled via a rotary mechanism of the central stalk subunits to proton translocation. Component of the F(0) channel, it forms part of the peripheral stalk, linking F(1) to F(0). The chain is ATP synthase subunit b from Vibrio alginolyticus.